The following is a 481-amino-acid chain: Tagaturonate/fructuronate epimerase (481 aa).

Asp161 (proton acceptor) is an active-site residue. His162 contacts a divalent metal cation. The active-site Proton donor is the Glu266. A divalent metal cation is bound by residues Lys308 and His341.

It belongs to the UxaE family. A divalent metal cation is required as a cofactor.

The catalysed reaction is keto-D-tagaturonate = keto-D-fructuronate. In terms of biological role, catalyzes the epimerization of D-tagaturonate (D-TagA) to D-fructuronate (D-FruA). The protein is Tagaturonate/fructuronate epimerase of Thermotoga maritima (strain ATCC 43589 / DSM 3109 / JCM 10099 / NBRC 100826 / MSB8).